Here is a 2084-residue protein sequence, read N- to C-terminus: RNA-directed RNA polymerase L (2084 aa).

Residues 20 to 221 (EPGLYDQIYD…IELQKSEEEL (202 aa)) form an endonuclease region. Residues H80, D112, and E126 each coordinate Mn(2+). K145 functions as the For endonuclease activity in the catalytic mechanism. Residues 969–1172 (SARSLGPGSI…FGIYSSEKST (204 aa)) form the RdRp catalytic domain. D1127 provides a ligand contact to Mg(2+). The cap-binding stretch occupies residues 1695–1810 (AQSGTLGGFS…TDGCPVRIME (116 aa)).

The protein belongs to the Bunyavirales RNA polymerase family. As to quaternary structure, homomultimer. Interacts with the glycoprotein N; this interaction allows efficient polymerase packaging into virus particles. Interacts with nucleoprotein N. Mn(2+) serves as cofactor. It depends on Mg(2+) as a cofactor.

It is found in the host Golgi apparatus. It localises to the host endoplasmic reticulum. The protein resides in the host endoplasmic reticulum-Golgi intermediate compartment. The protein localises to the virion. The enzyme catalyses RNA(n) + a ribonucleoside 5'-triphosphate = RNA(n+1) + diphosphate. With respect to regulation, inhibited by Baloxavir acid (BXA). Functionally, RNA-dependent RNA polymerase, which is responsible for the replication and transcription of the viral RNA genome using antigenomic RNA as an intermediate. During transcription, synthesizes subgenomic RNAs and assures their capping by a cap-snatching mechanism, which involves the endonuclease activity cleaving the host capped pre-mRNAs. These short capped RNAs are then used as primers for viral transcription. The 3'-end of subgenomic mRNAs molecules are not polyadenylated. During replication, the polymerase binds the 5' and 3' vRNA extremities at distinct sites. In turn, significant conformational changes occur in the polymerase and in vRNA to initiate active RNA synthesis. As a consequence of the use of the same enzyme for both transcription and replication, these mechanisms need to be well coordinated. The chain is RNA-directed RNA polymerase L from Dabie bandavirus (Severe fever with thrombocytopenia virus).